The sequence spans 490 residues: ATP synthase subunit beta, chloroplastic (490 aa).

Thr-6 carries the post-translational modification Phosphothreonine. Ser-13 is subject to Phosphoserine. 172 to 179 (GGAGVGKT) provides a ligand contact to ATP.

The protein belongs to the ATPase alpha/beta chains family. As to quaternary structure, F-type ATPases have 2 components, CF(1) - the catalytic core - and CF(0) - the membrane proton channel. CF(1) has five subunits: alpha(3), beta(3), gamma(1), delta(1), epsilon(1). CF(0) has four main subunits: a(1), b(1), b'(1) and c(9-12).

The protein localises to the plastid. It localises to the chloroplast thylakoid membrane. It carries out the reaction ATP + H2O + 4 H(+)(in) = ADP + phosphate + 5 H(+)(out). Its function is as follows. Produces ATP from ADP in the presence of a proton gradient across the membrane. The catalytic sites are hosted primarily by the beta subunits. The sequence is that of ATP synthase subunit beta, chloroplastic from Aethionema cordifolium (Lebanon stonecress).